A 656-amino-acid chain; its full sequence is uncharacterized protein (656 aa).

3 consecutive transmembrane segments (helical) span residues 7–27 (QQVL…LNHL), 40–60 (LMAM…FWTL), and 210–230 (AVFI…AFTI). An HAMP domain is found at 231–280 (TRPIRELLTGVKNIASGDFYQRIDLPFGGELGALIFNFNEMAERLEKYEQ). The 71-residue stretch at 289–359 (EKAKLETLVS…PILNDIIRKN (71 aa)) folds into the PAS domain. One can recognise a Histidine kinase domain in the interval 424–654 (NVSHELRTPL…CFFFDLMIAK (231 aa)). His-427 bears the Phosphohistidine; by autocatalysis mark.

Its subcellular location is the plastid. The protein localises to the chloroplast membrane. It carries out the reaction ATP + protein L-histidine = ADP + protein N-phospho-L-histidine.. This is an uncharacterized protein from Porphyra purpurea (Red seaweed).